The chain runs to 751 residues: WD repeat-containing protein 91 (751 aa).

Residues 183–205 adopt a coiled-coil conformation; sequence QKIACLQEENEIMRQKLFALQAE. Residues 237–398 are disordered; it reads ELGSNIMSSH…GARKEEKPAQ (162 aa). A compositionally biased stretch (polar residues) spans 238–267; that stretch reads LGSNIMSSHSNTNMNTPSQRTSGFLSSLLA. The span at 356–373 shows a compositional bias: basic and acidic residues; that stretch reads TEKKAENSDADPDLRSDT. WD repeat units lie at residues 410–449, 452–492, 517–559, 564–603, 606–645, 668–706, and 713–751; these read EHHSSIMHCRVDCSGRRVASLDVDGVIKIWSLDGIMQTKA, ISKS…NLCE, SAAA…QQLQ, PVPIAVNCTAFNHNGNLLVTGAADGFIRLFDMQQHQCALS, AHMGEVYSVDFSYDENAVYSIGEDGKFIQWDIHKSGQKVS, VQFPRGRLFAFDSEGKYMLTCSSTGGVIYKLNSDGSTLE, and GHRAPVVTVDWSTAVECGTCLTASMDGKIKLTTLLAQKS.

It belongs to the WD repeat WDR91 family.

The protein localises to the early endosome membrane. Its subcellular location is the late endosome membrane. Functions as a negative regulator of the PI3 kinase/PI3K activity associated with endosomal membranes. By modifying the phosphatidylinositol 3-phosphate/PtdInsP3 content of endosomal membranes may regulate endosome fusion, recycling, sorting and early to late endosome transport. The chain is WD repeat-containing protein 91 from Xenopus tropicalis (Western clawed frog).